A 1253-amino-acid polypeptide reads, in one-letter code: Pleckstrin homology-like domain family B member 2 (1253 aa).

The segment covering 1-12 (MEEHSYIQKELD) has biased composition (basic and acidic residues). Disordered regions lie at residues 1 to 43 (MEEH…PKKY), 60 to 159 (LTLS…KSHD), and 187 to 212 (DAGP…RKMS). Residues 29-43 (NDSQNMMESLSPKKY) are compositionally biased toward polar residues. Ser-71 and Ser-73 each carry phosphoserine. Positions 74-96 (PLGTSVRSSPSLAKIQGSKQFSY) are enriched in polar residues. Basic and acidic residues predominate over residues 126 to 144 (ADFDHYTGRDSERALRLSE). Residues Ser-157, Ser-204, Ser-212, Ser-242, and Ser-245 each carry the phosphoserine modification. The disordered stretch occupies residues 265–286 (NQLTPLSLPPRNSLGNSKRTKL). Phosphoserine occurs at positions 330, 334, 348, 351, 384, 387, 415, 420, 468, 489, and 501. Thr-504 is modified (phosphothreonine). The residue at position 513 (Ser-513) is a Phosphoserine. The segment at 525-567 (LSQSSASFFTPRSTRNDELLSDLTRTPPPPSSTFPKASSESSY) is disordered. Thr-550 and Thr-574 each carry phosphothreonine. 2 coiled-coil regions span residues 584–696 (SQEL…LDNC) and 722–807 (FEDL…LCNL). At Thr-898 the chain carries Phosphothreonine. A coiled-coil region spans residues 1032–1098 (IARIEEMERL…QKLIEKEVKI (67 aa)). In terms of domain architecture, PH spans 1143–1246 (EKTCRGFLIK…WMDVIVTGAE (104 aa)).

Interacts with FLNC. Interacts with AMOTL2; interaction may facilitate PHLDB2 localization to the myotube podosome cortex that surrounds the core. Part of a cortical microtubule stabilization complex (CMSC) composed of KANK1, PPFIA1, PPFIBP1, ERC1/ELKS, PHLDB2/LL5beta, CLASPs, KIF21A and possibly additional interactors; within CMSCs KANK1 and PHLDB2/LL5beta appear to be the core components for targeting of microtubule-binding proteins KIF21A and CLASPs, whereas PPFIA1, PPFIBP1 and ERC1/ELKS serve as scaffolds for protein clustering.

It localises to the cytoplasm. It is found in the cell cortex. The protein localises to the membrane. Its subcellular location is the cell projection. The protein resides in the podosome. In terms of biological role, seems to be involved in the assembly of the postsynaptic apparatus. May play a role in acetyl-choline receptor (AChR) aggregation in the postsynaptic membrane. This is Pleckstrin homology-like domain family B member 2 (PHLDB2) from Homo sapiens (Human).